Here is a 312-residue protein sequence, read N- to C-terminus: Putative clathrin assembly protein At2g01920 (312 aa).

Residues 21–152 (LITATDEKFT…ILYYNKNMIR (132 aa)) form the ENTH domain.

It localises to the membrane. The protein resides in the clathrin-coated pit. It is found in the golgi apparatus. Its subcellular location is the cytoplasmic vesicle. The protein localises to the clathrin-coated vesicle. The sequence is that of Putative clathrin assembly protein At2g01920 from Arabidopsis thaliana (Mouse-ear cress).